We begin with the raw amino-acid sequence, 672 residues long: DNA mismatch repair protein MutL (672 aa).

Residues 443 to 454 (SYTSDSNQYENS) are compositionally biased toward polar residues. Residues 443–469 (SYTSDSNQYENSCKSDVDKESKSKTTG) form a disordered region. The segment covering 455-465 (CKSDVDKESKS) has biased composition (basic and acidic residues).

This sequence belongs to the DNA mismatch repair MutL/HexB family.

Its function is as follows. This protein is involved in the repair of mismatches in DNA. It is required for dam-dependent methyl-directed DNA mismatch repair. May act as a 'molecular matchmaker', a protein that promotes the formation of a stable complex between two or more DNA-binding proteins in an ATP-dependent manner without itself being part of a final effector complex. This is DNA mismatch repair protein MutL from Clostridium botulinum (strain Eklund 17B / Type B).